The following is a 444-amino-acid chain: Cysteine proteinase 2 (444 aa).

Positions 1-19 (MATSRAALCAVAVVCVVLA) form a signal peptide, or 27. A propeptide spans 20-124 (AACAPARAIH…HYRKARADLS (105 aa)) (activation peptide). The cysteines at positions 147 and 188 are disulfide-linked. Residue Cys150 is part of the active site. The N-linked (GlcNAc...) asparagine glycan is linked to Asn228. Active-site residues include His289 and Asn309. An N-linked (GlcNAc...) asparagine glycan is attached at Asn372.

Belongs to the peptidase C1 family.

It localises to the lysosome. Functionally, the cysteine proteinases have a potential role in host-parasite interaction and virulence. The chain is Cysteine proteinase 2 (CYS2) from Leishmania pifanoi.